The chain runs to 446 residues: Glucose-1-phosphate adenylyltransferase (446 aa).

Residues tyrosine 119, glycine 184, 199-200 (EK), and serine 217 contribute to the alpha-D-glucose 1-phosphate site.

Belongs to the bacterial/plant glucose-1-phosphate adenylyltransferase family. In terms of assembly, homotetramer.

It catalyses the reaction alpha-D-glucose 1-phosphate + ATP + H(+) = ADP-alpha-D-glucose + diphosphate. It participates in glycan biosynthesis; glycogen biosynthesis. Its function is as follows. Involved in the biosynthesis of ADP-glucose, a building block required for the elongation reactions to produce glycogen. Catalyzes the reaction between ATP and alpha-D-glucose 1-phosphate (G1P) to produce pyrophosphate and ADP-Glc. In Rhodopirellula baltica (strain DSM 10527 / NCIMB 13988 / SH1), this protein is Glucose-1-phosphate adenylyltransferase.